A 104-amino-acid polypeptide reads, in one-letter code: MAVRKLWKTVVQLFSKSKSEECNTEAGTMEVSFLKYGVRGLNADCSYVKSQCIKLSECECLYTFASDVCKEDFHNSEEMKVFVVQHSQEMVDGTDLFVHAEESV.

This is Protein U9 (U9) from Homo sapiens (Human).